We begin with the raw amino-acid sequence, 84 residues long: MAHKKAGGSTRNGRDSESKRLGVKRFGGESVLAGNIIVRQRGTKFHAGVNVGIGRDHTLFALTDGKVKFEVKGPQNRKFISIED.

Residues 1-22 (MAHKKAGGSTRNGRDSESKRLG) form a disordered region.

Belongs to the bacterial ribosomal protein bL27 family.

This is Large ribosomal subunit protein bL27 from Shewanella pealeana (strain ATCC 700345 / ANG-SQ1).